We begin with the raw amino-acid sequence, 179 residues long: Deoxyuridine 5'-triphosphate nucleotidohydrolase (179 aa).

Substrate is bound by residues R90–G92, N103, T107–D109, and K117.

Belongs to the dUTPase family. Mg(2+) serves as cofactor.

The catalysed reaction is dUTP + H2O = dUMP + diphosphate + H(+). It participates in pyrimidine metabolism; dUMP biosynthesis; dUMP from dCTP (dUTP route): step 2/2. Functionally, this enzyme is involved in nucleotide metabolism: it produces dUMP, the immediate precursor of thymidine nucleotides and it decreases the intracellular concentration of dUTP so that uracil cannot be incorporated into DNA. This chain is Deoxyuridine 5'-triphosphate nucleotidohydrolase, found in Thermobifida fusca (strain YX).